A 386-amino-acid polypeptide reads, in one-letter code: Alanine racemase (386 aa).

Catalysis depends on lysine 38, which acts as the Proton acceptor; specific for D-alanine. The residue at position 38 (lysine 38) is an N6-(pyridoxal phosphate)lysine. Substrate is bound at residue arginine 136. Tyrosine 267 serves as the catalytic Proton acceptor; specific for L-alanine. Methionine 315 is a binding site for substrate.

It belongs to the alanine racemase family. Pyridoxal 5'-phosphate serves as cofactor.

The enzyme catalyses L-alanine = D-alanine. It participates in amino-acid biosynthesis; D-alanine biosynthesis; D-alanine from L-alanine: step 1/1. Its function is as follows. Catalyzes the interconversion of L-alanine and D-alanine. May also act on other amino acids. The polypeptide is Alanine racemase (alr) (Clostridium perfringens (strain SM101 / Type A)).